Consider the following 442-residue polypeptide: tRNA modification GTPase MnmE (442 aa).

3 residues coordinate (6S)-5-formyl-5,6,7,8-tetrahydrofolate: Arg-23, Glu-82, and Lys-121. In terms of domain architecture, TrmE-type G spans 217–363; sequence PFKIAIIGET…LVDLLTKYIN (147 aa). Residue Asn-227 participates in K(+) binding. Residues 227 to 232, 246 to 252, and 271 to 274 each bind GTP; these read NVGKSS, SNIKGST, and DTAG. Residue Ser-231 participates in Mg(2+) binding. Ser-246, Ile-248, and Ser-251 together coordinate K(+). Thr-252 is a Mg(2+) binding site. A (6S)-5-formyl-5,6,7,8-tetrahydrofolate-binding site is contributed by Lys-442.

The protein belongs to the TRAFAC class TrmE-Era-EngA-EngB-Septin-like GTPase superfamily. TrmE GTPase family. Homodimer. Heterotetramer of two MnmE and two MnmG subunits. The cofactor is K(+).

The protein localises to the cytoplasm. Functionally, exhibits a very high intrinsic GTPase hydrolysis rate. Involved in the addition of a carboxymethylaminomethyl (cmnm) group at the wobble position (U34) of certain tRNAs, forming tRNA-cmnm(5)s(2)U34. In Mycoplasma genitalium (strain ATCC 33530 / DSM 19775 / NCTC 10195 / G37) (Mycoplasmoides genitalium), this protein is tRNA modification GTPase MnmE.